A 514-amino-acid chain; its full sequence is Carboxysome shell carbonic anhydrase (514 aa).

Positions 1–27 are disordered; sequence MAYRNRNLASQTQRPLAPTAPRRRPVV. Cysteine 175 provides a ligand contact to Zn(2+). The active-site Proton acceptor is the aspartate 177. The Zn(2+) site is built by histidine 243 and cysteine 254.

The protein belongs to the beta-class carbonic anhydrase family. CsoSCA subfamily. Homodimer. Zn(2+) is required as a cofactor.

Its subcellular location is the carboxysome. It catalyses the reaction hydrogencarbonate + H(+) = CO2 + H2O. Its function is as follows. Reversible hydration of carbon dioxide. Essential for photosynthetic carbon dioxide fixation, supplies CO(2) to RuBisCO (ribulose bisphosphate carboxylase, cbbL-cbbS) in the carboxysome. The polypeptide is Carboxysome shell carbonic anhydrase (Prochlorococcus marinus (strain MIT 9313)).